The following is a 624-amino-acid chain: ATP-dependent zinc metalloprotease FtsH (624 aa).

Topologically, residues 1 to 7 (MPRAPFS) are cytoplasmic. Residues 8 to 28 (LLALVLGLAFLAWAFSLAGTV) form a helical membrane-spanning segment. At 29 to 103 (GAPSGTVNYT…VRVEPPQGQN (75 aa)) the chain is on the periplasmic side. Residues 104 to 124 (ALGFLWPLLLVGLLIGALYYF) traverse the membrane as a helical segment. Topologically, residues 125 to 624 (SRNGRAGPSD…VKPGGALGGA (500 aa)) are cytoplasmic. Residues Ala-159, 199 to 203 (GVGKT), and His-204 contribute to the ATP site. His-418 provides a ligand contact to Zn(2+). Glu-419 is an active-site residue. His-422 and Asp-493 together coordinate Zn(2+). Residues 595–624 (PLEAPEEAREEREPPRVVPKVKPGGALGGA) are disordered. Residues 600–609 (EEAREEREPP) are compositionally biased toward basic and acidic residues.

The protein in the central section; belongs to the AAA ATPase family. This sequence in the C-terminal section; belongs to the peptidase M41 family. The isolated soluble domain (residues 126-624) forms a stable hexamer in which the AAA+ domains (residues 126-400) are alternatively open or closed. The cofactor is Zn(2+).

It localises to the cell inner membrane. With respect to regulation, the proteolytic activity is dependent on ATP, both the ATPase and protease activities are inhibited by ADP. Its function is as follows. Acts as a processive, ATP-dependent zinc metallopeptidase for both cytoplasmic and membrane proteins. Plays a role in the quality control of integral membrane proteins. Functionally, degrades preferentially unfolded substrates in a processive, ATP-dependent manner, usually after hydrophobic residues. The polypeptide is ATP-dependent zinc metalloprotease FtsH (Thermus thermophilus (strain ATCC 27634 / DSM 579 / HB8)).